We begin with the raw amino-acid sequence, 149 residues long: DnaJ homolog subfamily C member 24 (149 aa).

The 72-residue stretch at 11 to 82 (DWYSILGADP…ETKKEYDLQR (72 aa)) folds into the J domain. The DPH-type MB domain occupies 93–148 (VDARIYLEEMSWNEDDHSFSLSCRCGGKYSVSKDEAEEVTLISCDTCSLIIELLHY). Positions 115, 117, 136, and 139 each coordinate Zn(2+).

Belongs to the DPH4 family. As to quaternary structure, monomer and homooligomer. Iron binding promotes oligomerization.

It localises to the cytoplasm. The protein localises to the cytoskeleton. Its pathway is protein modification; peptidyl-diphthamide biosynthesis. Functionally, stimulates the ATPase activity of several Hsp70-type chaperones. This ability is enhanced by iron-binding. The iron-bound form is redox-active and can function as electron carrier. Plays a role in the diphthamide biosynthesis, a post-translational modification of histidine which occurs in translation elongation factor 2 (EEF2). The sequence is that of DnaJ homolog subfamily C member 24 (DNAJC24) from Bos taurus (Bovine).